The following is a 475-amino-acid chain: Ribosomal protein uS12 methylthiotransferase RimO (475 aa).

In terms of domain architecture, MTTase N-terminal spans 5–114; sequence RTVRLIRLGC…IAQRLEDVLA (110 aa). Positions 14, 49, 78, 174, 178, and 181 each coordinate [4Fe-4S] cluster. The region spanning 160–390 is the Radical SAM core domain; sequence LDDSPVAPLK…AGIAEEVTAD (231 aa). The TRAM domain maps to 393–461; it reads RARLGETVDV…GVDFLAAPVT (69 aa).

This sequence belongs to the methylthiotransferase family. RimO subfamily. The cofactor is [4Fe-4S] cluster.

Its subcellular location is the cytoplasm. The catalysed reaction is L-aspartate(89)-[ribosomal protein uS12]-hydrogen + (sulfur carrier)-SH + AH2 + 2 S-adenosyl-L-methionine = 3-methylsulfanyl-L-aspartate(89)-[ribosomal protein uS12]-hydrogen + (sulfur carrier)-H + 5'-deoxyadenosine + L-methionine + A + S-adenosyl-L-homocysteine + 2 H(+). In terms of biological role, catalyzes the methylthiolation of an aspartic acid residue of ribosomal protein uS12. This chain is Ribosomal protein uS12 methylthiotransferase RimO, found in Acidothermus cellulolyticus (strain ATCC 43068 / DSM 8971 / 11B).